The sequence spans 64 residues: MAKKGTRVVVTLECTEARTSTDPKRSNGVSRYTTEKNRRNTTERLELKKFNPHLNRMTIHKEIK.

The segment at 19-40 (TSTDPKRSNGVSRYTTEKNRRN) is disordered.

This sequence belongs to the bacterial ribosomal protein bL33 family.

The polypeptide is Large ribosomal subunit protein bL33 (Prochlorococcus marinus (strain MIT 9215)).